The sequence spans 733 residues: Alpha-galactosidase 1 (733 aa).

The active-site Nucleophile is Asp480. Asp550 acts as the Proton donor in catalysis.

It belongs to the glycosyl hydrolase 36 family.

The catalysed reaction is Hydrolysis of terminal, non-reducing alpha-D-galactose residues in alpha-D-galactosides, including galactose oligosaccharides, galactomannans and galactolipids.. Its function is as follows. Alpha-galactosidase associated with the raffinose operon. This Pediococcus pentosaceus protein is Alpha-galactosidase 1 (agaR).